The chain runs to 560 residues: Triacylglyceride transporter MSMEG_3069/MSMEI_2992 (560 aa).

14 consecutive transmembrane segments (helical) span residues 16-36 (LAVL…VDIM), 48-68 (QVTP…PLLG), 78-98 (MLIQ…ALSS), 108-128 (IIQG…AADL), 143-163 (AAQE…VWLF), 168-188 (AVFW…HFSL), 200-220 (VDVI…VGLY), 229-249 (VLPS…VAFF), 269-289 (PFLA…VTLV), 307-327 (AFLL…GGWL), 336-356 (VVLI…HWSV), 368-388 (FTLP…GLVI), 411-431 (VVVA…AWGF), and 477-497 (IFLS…LISG). A beta-hairpin region spans residues 362–371 (RHNLGLFTLP). Residues 519–560 (IDPYDAGDADDAPTEMLDLPTQVLSAPPSDPGDERPGRHRAP) form a disordered region.

Belongs to the major facilitator superfamily. P55 (TC 2.A.1.3.34) family.

It localises to the cell inner membrane. Its activity is regulated as follows. Resistance to ethidium bromide is inhibited by reserpine. Its function is as follows. In association with lipoprotein LprG transports triacyglycerides (TAG) across the inner cell membrane into the periplasm; TAG probably regulates lipid metabolism and growth regulation and plays a structural role in the outer membrane. TAG (and maybe other lipids) enters the central cavity of the P55 transporter from within the cell inner membrane via clefts on the cytoplasmic face of P55 between TM5-TM8 and TM2-TM11. From there the lipid is probably transferred to the hydrophobic cavity of LprG. Confers resistance to ethidium bromide, possibly acting as an efflux pump, requires LprG lipoprotein for normal function. Export of ethidium bromide can be complemented by the equivalent operon from M.tuberculosis (lprG-Rv1410c). Involved in drug susceptibilty, its expression alone partially complements the antibiotic susceptibilty of a double lprG-mfs deletion. Probably does not function as a bona fide drug efflux pump, but instead plays a role in outer membrane biogenesis. Probably required with LprG for normal surface localization of lipoarabinomannan (LAM). This Mycolicibacterium smegmatis (strain ATCC 700084 / mc(2)155) (Mycobacterium smegmatis) protein is Triacylglyceride transporter MSMEG_3069/MSMEI_2992.